A 616-amino-acid chain; its full sequence is Chaperone protein HscA (616 aa).

The protein belongs to the heat shock protein 70 family.

Its function is as follows. Chaperone involved in the maturation of iron-sulfur cluster-containing proteins. Has a low intrinsic ATPase activity which is markedly stimulated by HscB. Involved in the maturation of IscU. The sequence is that of Chaperone protein HscA from Proteus mirabilis (strain HI4320).